A 333-amino-acid polypeptide reads, in one-letter code: Acetyl-coenzyme A carboxylase carboxyl transferase subunit alpha (333 aa).

Positions 48 to 308 constitute a CoA carboxyltransferase C-terminal domain; sequence ALEVKVETLR…KEMLIEELRI (261 aa).

This sequence belongs to the AccA family. In terms of assembly, acetyl-CoA carboxylase is a heterohexamer composed of biotin carboxyl carrier protein (AccB), biotin carboxylase (AccC) and two subunits each of ACCase subunit alpha (AccA) and ACCase subunit beta (AccD).

The protein localises to the cytoplasm. It carries out the reaction N(6)-carboxybiotinyl-L-lysyl-[protein] + acetyl-CoA = N(6)-biotinyl-L-lysyl-[protein] + malonyl-CoA. It functions in the pathway lipid metabolism; malonyl-CoA biosynthesis; malonyl-CoA from acetyl-CoA: step 1/1. In terms of biological role, component of the acetyl coenzyme A carboxylase (ACC) complex. First, biotin carboxylase catalyzes the carboxylation of biotin on its carrier protein (BCCP) and then the CO(2) group is transferred by the carboxyltransferase to acetyl-CoA to form malonyl-CoA. The protein is Acetyl-coenzyme A carboxylase carboxyl transferase subunit alpha of Chlorobium phaeobacteroides (strain DSM 266 / SMG 266 / 2430).